The following is a 462-amino-acid chain: MDTTLSKASPVEYELDLHATADELEPKLKEALNAQRKNMDVQGFRKGKVPLGLVKKMHGEAIGYRVAEQFVQEAFEEEVEETDAIEPLGQPTLVDLDYELDADLQATLRFGVRPGVELEDLSSVEITMLDPEITEEDVEDEIERLRKEEADLLPLEEEAAEDTDYVNIDLQRIDPDTDTPIIGDKDEDLTFFLDDDRLKEELREALVGQKAGDTFRVELPQEHPAHEHAGHGHPHEHEGDGEDRLYEVTVNDVKRRDLPPLDEEFVRRVTEGELDDLEAFRNDIRERLQEAWNERAREMAQGEVIDKMLELHPVPVPESVIEGYLDSFVKQVEEENDGELPEDFDEEHFRQRNRRDAEDQGRWMLIRDQIVEEQDLEVSNEEIQTFFAEQSGGEEQVTAQQIEQFYQTMPQMMEKVEQQILSDKVYDFLFDRLDVESKSREEFEEEMQQQQQQQAQRQRMAP.

Residues 163-259 (TDYVNIDLQR…VNDVKRRDLP (97 aa)) enclose the PPIase FKBP-type domain. The segment at 439–462 (SREEFEEEMQQQQQQQAQRQRMAP) is disordered. A compositionally biased stretch (low complexity) spans 448-462 (QQQQQQQAQRQRMAP).

This sequence belongs to the FKBP-type PPIase family. Tig subfamily.

It is found in the cytoplasm. It catalyses the reaction [protein]-peptidylproline (omega=180) = [protein]-peptidylproline (omega=0). In terms of biological role, involved in protein export. Acts as a chaperone by maintaining the newly synthesized protein in an open conformation. Functions as a peptidyl-prolyl cis-trans isomerase. This is Trigger factor from Salinibacter ruber (strain DSM 13855 / M31).